The primary structure comprises 955 residues: Kinesin-like protein K39 (955 aa).

One can recognise a Kinesin motor domain in the interval 12 to 392 (RVKVSVRVRP…LRYASRARDI (381 aa)). An ATP-binding site is contributed by 122–129 (GQTGSGKT). The stretch at 426–955 (PAYVSELKKK…EERAAELASQ (530 aa)) forms a coiled coil. Disordered stretches follow at residues 682–712 (ELDAAASTSQNARESACERLTSLEQQLRESE) and 725–955 (TAAA…LASQ). Repeat copies occupy residues 704–742 (LEQQLRESEERAAELASQLEATAAAKSSAEQDRENTRAT), 743–781 (LEQQLRESEARAAELASQLEATAAAKMSAEQDRENTRAT), 782–820 (LEQQLRDSEERAAELASQLESTTAAKMSAEQDRESTRAT), 821–859 (LEQQLRDSEERAAELASQLESTTAAKMSAEQDRESTRAT), 860–898 (LEQQLRESEERAAELASQLESTTAAKMSAEQDRESTRAT), 899–937 (LEQQLRDSEERAAELASQLEATAAAKSSAEQDRENTRAA), and 938–955 (LEQQLRDSEERAAELASQ). The segment at 704–955 (LEQQLRESEE…EERAAELASQ (252 aa)) is 7 X 39 AA approximate tandem repeats. Composition is skewed to basic and acidic residues over residues 785–794 (QLRDSEERAA), 824–833 (QLRDSEERAA), 863–872 (QLRESEERAA), 902–911 (QLRDSEERAA), and 941–955 (QLRDSEERAAELASQ).

The protein belongs to the TRAFAC class myosin-kinesin ATPase superfamily. Kinesin family.

Its subcellular location is the cytoplasm. The protein resides in the cytoskeleton. The chain is Kinesin-like protein K39 (KIN) from Leishmania chagasi.